Reading from the N-terminus, the 458-residue chain is Argininosuccinate lyase (458 aa).

It belongs to the lyase 1 family. Argininosuccinate lyase subfamily.

It is found in the cytoplasm. It carries out the reaction 2-(N(omega)-L-arginino)succinate = fumarate + L-arginine. It functions in the pathway amino-acid biosynthesis; L-arginine biosynthesis; L-arginine from L-ornithine and carbamoyl phosphate: step 3/3. This Salmonella agona (strain SL483) protein is Argininosuccinate lyase.